Consider the following 599-residue polypeptide: Protein linkin (599 aa).

Residues 1–19 form the signal peptide; the sequence is MKKILPIIWLINLVSGSLS. Over 20–553 the chain is Extracellular; sequence LEKKAPDLLG…SRLYVTPSAL (534 aa). 5 N-linked (GlcNAc...) asparagine glycosylation sites follow: asparagine 50, asparagine 117, asparagine 163, asparagine 361, and asparagine 378. The chain crosses the membrane as a helical span at residues 554 to 574; the sequence is IVQSLAVIALVCCMLLMVVVF. Topologically, residues 575-599 are cytoplasmic; that stretch reads LHYREKKEDRYERQQQSHRFHFDAM.

Belongs to the TIP family. In terms of tissue distribution, expressed in all somatic gonadal cells including distal tip cells, anchor cell, uterine precursor cells and spermatheca precursor cells of the hermaphrodite. Also expressed in the pharynx, pharyngeal-intestinal valve, intestine, excretory cell and canal, seam cells, a subset of hypodermal cells, vulval precursor cells of the hermaphrodite and hook precursor cells in the male.

The protein resides in the apical cell membrane. It localises to the lateral cell membrane. Probable cell adhesion protein involved in gonadal cell migration. In Caenorhabditis elegans, this protein is Protein linkin.